The primary structure comprises 225 residues: C-reactive protein (225 aa).

The N-terminal stretch at 1 to 19 (MEKLLWCSLVMIGFSQAFA) is a signal peptide. At Q20 the chain carries Pyrrolidone carboxylic acid. A Pentraxin (PTX) domain is found at 24 to 225 (SKTAFVFPKE…DVFIKPQLWP (202 aa)). A disulfide bridge links C55 with C116. Residues N80, E157, Q158, D159, and Q169 each coordinate Ca(2+).

Belongs to the pentraxin family. Homopentamer. Pentraxin (or pentaxin) have a discoid arrangement of 5 non-covalently bound subunits. Interacts with FCN1; may regulate monocyte activation by FCN1. Ca(2+) serves as cofactor. As to expression, found in plasma.

It is found in the secreted. Its function is as follows. Displays several functions associated with host defense: it promotes agglutination, bacterial capsular swelling, phagocytosis and complement fixation through its calcium-dependent binding to phosphorylcholine. Can interact with DNA and histones and may scavenge nuclear material released from damaged circulating cells. This is C-reactive protein (CRP) from Mesocricetus auratus (Golden hamster).